We begin with the raw amino-acid sequence, 231 residues long: 7-cyano-7-deazaguanine synthase (231 aa).

Residue 8–18 (FSGGQDSTTCL) coordinates ATP. Zn(2+) contacts are provided by Cys188, Cys197, Cys200, and Cys203.

This sequence belongs to the QueC family. Zn(2+) serves as cofactor.

It carries out the reaction 7-carboxy-7-deazaguanine + NH4(+) + ATP = 7-cyano-7-deazaguanine + ADP + phosphate + H2O + H(+). The protein operates within purine metabolism; 7-cyano-7-deazaguanine biosynthesis. Catalyzes the ATP-dependent conversion of 7-carboxy-7-deazaguanine (CDG) to 7-cyano-7-deazaguanine (preQ(0)). The protein is 7-cyano-7-deazaguanine synthase of Shigella dysenteriae serotype 1 (strain Sd197).